The primary structure comprises 448 residues: Trigger factor (448 aa).

The PPIase FKBP-type domain occupies 167 to 253; sequence GSIVRVDFVE…LKDIKRRDIP (87 aa).

Belongs to the FKBP-type PPIase family. Tig subfamily.

The protein localises to the cytoplasm. The catalysed reaction is [protein]-peptidylproline (omega=180) = [protein]-peptidylproline (omega=0). Its function is as follows. Involved in protein export. Acts as a chaperone by maintaining the newly synthesized protein in an open conformation. Functions as a peptidyl-prolyl cis-trans isomerase. This Borrelia turicatae (strain 91E135) protein is Trigger factor.